The sequence spans 155 residues: Large ribosomal subunit protein uL30 (155 aa).

This sequence belongs to the universal ribosomal protein uL30 family. Part of the 50S ribosomal subunit.

In Nanoarchaeum equitans (strain Kin4-M), this protein is Large ribosomal subunit protein uL30.